Consider the following 187-residue polypeptide: Benzene 1,2-dioxygenase subunit beta (187 aa).

The protein belongs to the bacterial ring-hydroxylating dioxygenase beta subunit family. As to quaternary structure, this dioxygenase system consists of four proteins: the two subunits of the hydroxylase component (BedC1 and BedC2), a ferredoxin (BedB) and a ferredoxin reductase (BedA).

It catalyses the reaction benzene + NADH + O2 + H(+) = cis-1,2-dihydrobenzene-1,2-diol + NAD(+). Its pathway is aromatic compound metabolism; benzene degradation; catechol from benzene: step 1/2. The beta subunit may be responsible for the substrate specificity of the enzyme. In Pseudomonas putida (Arthrobacter siderocapsulatus), this protein is Benzene 1,2-dioxygenase subunit beta (bedC2).